Here is a 408-residue protein sequence, read N- to C-terminus: Dual-specificity RNA methyltransferase RlmN (408 aa).

The active-site Proton acceptor is the Glu122. Residues 128–369 enclose the Radical SAM core domain; it reads EEDRGTLCIS…NRAGYASPIR (242 aa). Cys135 and Cys380 form a disulfide bridge. Positions 142, 146, and 149 each coordinate [4Fe-4S] cluster. Residues 206–207, Ser238, 260–262, and Asn337 contribute to the S-adenosyl-L-methionine site; these read GE and SLH. Cys380 acts as the S-methylcysteine intermediate in catalysis.

Belongs to the radical SAM superfamily. RlmN family. Requires [4Fe-4S] cluster as cofactor.

The protein localises to the cytoplasm. The enzyme catalyses adenosine(2503) in 23S rRNA + 2 reduced [2Fe-2S]-[ferredoxin] + 2 S-adenosyl-L-methionine = 2-methyladenosine(2503) in 23S rRNA + 5'-deoxyadenosine + L-methionine + 2 oxidized [2Fe-2S]-[ferredoxin] + S-adenosyl-L-homocysteine. It catalyses the reaction adenosine(37) in tRNA + 2 reduced [2Fe-2S]-[ferredoxin] + 2 S-adenosyl-L-methionine = 2-methyladenosine(37) in tRNA + 5'-deoxyadenosine + L-methionine + 2 oxidized [2Fe-2S]-[ferredoxin] + S-adenosyl-L-homocysteine. In terms of biological role, specifically methylates position 2 of adenine 2503 in 23S rRNA and position 2 of adenine 37 in tRNAs. m2A2503 modification seems to play a crucial role in the proofreading step occurring at the peptidyl transferase center and thus would serve to optimize ribosomal fidelity. The protein is Dual-specificity RNA methyltransferase RlmN of Chelativorans sp. (strain BNC1).